Consider the following 463-residue polypeptide: Probable diacyglycerol O-acyltransferase tgs1 (463 aa).

N-acetylmethionine is present on Met1. The active-site Proton acceptor is His137.

Belongs to the long-chain O-acyltransferase family.

It catalyses the reaction an acyl-CoA + a 1,2-diacyl-sn-glycerol = a triacyl-sn-glycerol + CoA. The enzyme catalyses di-(9Z)-octadecenoylglycerol + (9Z)-octadecenoyl-CoA = 1,2,3-tri-(9Z-octadecenoyl)-glycerol + CoA. It participates in glycerolipid metabolism; triacylglycerol biosynthesis. Its function is as follows. Catalyzes the terminal and only committed step in triacylglycerol synthesis by using diacylglycerol and fatty acyl CoA as substrates. Required for storage lipid synthesis. Functionally, upon expression in E.coli functions as a triacylglycerol synthase, making triacylglycerol (TG) from diolein and long-chain fatty acyl-CoA. Prefers C(26:0)-CoA over C(18:1)-CoA. TG synthesis activity increases in M.tuberculosis upon oxygen depletion and NO treatment, with concomitant accumulation of TG in inclusion bodies. As disruption of the gene encoding this protein obviates TG synthesis this seems to be the major enzyme involved in production of TG. Has no wax synthase activity to produce wax esters. This is Probable diacyglycerol O-acyltransferase tgs1 (tgs1) from Mycobacterium tuberculosis (strain ATCC 25618 / H37Rv).